Consider the following 321-residue polypeptide: Quinol oxidase subunit 2 (321 aa).

An N-terminal signal peptide occupies residues methionine 1–glycine 25. Cysteine 26 carries N-palmitoyl cysteine lipidation. Cysteine 26 carries the S-diacylglycerol cysteine lipid modification. A run of 2 helical transmembrane segments spans residues serine 49–valine 69 and threonine 90–proline 110. A disordered region spans residues glutamine 294 to glutamate 321. Over residues serine 300–glutamate 321 the composition is skewed to basic and acidic residues.

Belongs to the cytochrome c oxidase subunit 2 family.

Its subcellular location is the cell membrane. It catalyses the reaction 2 a quinol + O2 = 2 a quinone + 2 H2O. In terms of biological role, catalyzes quinol oxidation with the concomitant reduction of oxygen to water. Major component for energy conversion during vegetative growth. Subunit II transfers the electrons from a quinol to the binuclear center of the catalytic subunit I. In Bacillus spizizenii (strain ATCC 23059 / NRRL B-14472 / W23) (Bacillus subtilis subsp. spizizenii), this protein is Quinol oxidase subunit 2 (qoxA).